A 374-amino-acid chain; its full sequence is Putative 12-oxophytodienoate reductase 5 (374 aa).

Residues 30–32 (PMT), Ala63, and Gln105 contribute to the FMN site. 177–180 (HGAN) contributes to the substrate binding site. Tyr182 (proton donor) is an active-site residue. FMN is bound at residue Arg229. A substrate-binding site is contributed by Arg270. FMN is bound by residues Gly300 and 321–322 (GR).

This sequence belongs to the NADH:flavin oxidoreductase/NADH oxidase family. Requires FMN as cofactor.

In terms of biological role, putative oxophytodienoate reductase that may be involved in the biosynthesis or metabolism of oxylipin signaling molecules. The protein is Putative 12-oxophytodienoate reductase 5 (OPR5) of Oryza sativa subsp. japonica (Rice).